The chain runs to 167 residues: CS6 fimbrial subunit B (167 aa).

The first 21 residues, 1–21, serve as a signal peptide directing secretion; sequence MLKKIISAIALIAGTSGVVNA.

The protein localises to the fimbrium. The polypeptide is CS6 fimbrial subunit B (cssB) (Escherichia coli).